The chain runs to 443 residues: Methionine aminopeptidase 2-1 (443 aa).

Residues 1–90 are disordered; that stretch reads MAAQADDELN…RVPVSELFPN (90 aa). Positions 33–48 are enriched in acidic residues; that stretch reads ADNDDSEDDEKEEEGG. A compositionally biased stretch (basic residues) spans 58–73; that stretch reads KKKKKRKPKKKKKGGA. His196 contributes to the substrate binding site. 3 residues coordinate a divalent metal cation: Asp216, Asp227, and His296. His304 contacts substrate. Residues Glu329 and Glu424 each coordinate a divalent metal cation.

Belongs to the peptidase M24A family. Methionine aminopeptidase eukaryotic type 2 subfamily. The cofactor is Co(2+). It depends on Zn(2+) as a cofactor. Requires Mn(2+) as cofactor. Fe(2+) serves as cofactor.

The protein resides in the cytoplasm. It catalyses the reaction Release of N-terminal amino acids, preferentially methionine, from peptides and arylamides.. Its function is as follows. Cotranslationally removes the N-terminal methionine from nascent proteins. The N-terminal methionine is often cleaved when the second residue in the primary sequence is small and uncharged (Met-Ala-, Cys, Gly, Pro, Ser, Thr, or Val). The protein is Methionine aminopeptidase 2-1 of Talaromyces stipitatus (strain ATCC 10500 / CBS 375.48 / QM 6759 / NRRL 1006) (Penicillium stipitatum).